Consider the following 175-residue polypeptide: Large ribosomal subunit protein uL10 (175 aa).

It belongs to the universal ribosomal protein uL10 family. Part of the ribosomal stalk of the 50S ribosomal subunit. The N-terminus interacts with L11 and the large rRNA to form the base of the stalk. The C-terminus forms an elongated spine to which L12 dimers bind in a sequential fashion forming a multimeric L10(L12)X complex.

In terms of biological role, forms part of the ribosomal stalk, playing a central role in the interaction of the ribosome with GTP-bound translation factors. This is Large ribosomal subunit protein uL10 from Psychrobacter sp. (strain PRwf-1).